Reading from the N-terminus, the 223-residue chain is N-terminal Xaa-Pro-Lys N-methyltransferase 1 (223 aa).

Methionine 1 is modified (N-acetylmethionine). Residue threonine 2 is modified to N-acetylthreonine; in N-terminal Xaa-Pro-Lys N-methyltransferase 1, N-terminally processed. S-adenosyl-L-methionine-binding positions include glycine 69, arginine 74, 91 to 93, 119 to 120, and glutamine 135; these read DVT and LQ.

This sequence belongs to the methyltransferase superfamily. NTM1 family.

It is found in the nucleus. The enzyme catalyses N-terminal L-alanyl-L-prolyl-L-lysyl-[protein] + 3 S-adenosyl-L-methionine = N-terminal N,N,N-trimethyl-L-alanyl-L-prolyl-L-lysyl-[protein] + 3 S-adenosyl-L-homocysteine + 3 H(+). It catalyses the reaction N-terminal L-seryl-L-prolyl-L-lysyl-[protein] + 3 S-adenosyl-L-methionine = N-terminal N,N,N-trimethyl-L-seryl-L-prolyl-L-lysyl-[protein] + 3 S-adenosyl-L-homocysteine + 3 H(+). The catalysed reaction is N-terminal L-prolyl-L-prolyl-L-lysyl-[protein] + 2 S-adenosyl-L-methionine = N-terminal N,N-dimethyl-L-prolyl-L-prolyl-L-lysyl-[protein] + 2 S-adenosyl-L-homocysteine + 2 H(+). Distributive alpha-N-methyltransferase that methylates the N-terminus of target proteins containing the N-terminal motif [Ala/Gly/Pro/Ser]-Pro-Lys when the initiator Met is cleaved. Specifically catalyzes mono-, di- or tri-methylation of the exposed alpha-amino group of the Ala, Gly or Ser residue in the [Ala/Gly/Ser]-Pro-Lys motif and mono- or di-methylation of Pro in the Pro-Pro-Lys motif. Some of the substrates may be primed by NTMT2-mediated monomethylation. Catalyzes the trimethylation of the N-terminal Gly in CENPA (after removal of Met-1). Responsible for the N-terminal methylation of KLHL31, MYL2, MYL3, RB1, RCC1, RPL23A and SET. Required during mitosis for normal bipolar spindle formation and chromosome segregation via its action on RCC1. The polypeptide is N-terminal Xaa-Pro-Lys N-methyltransferase 1 (Ntmt1) (Rattus norvegicus (Rat)).